The primary structure comprises 401 residues: 8-amino-7-oxononanoate synthase (401 aa).

Residue R24 coordinates substrate. Position 111–112 (111–112) interacts with pyridoxal 5'-phosphate; that stretch reads GF. A substrate-binding site is contributed by H137. Pyridoxal 5'-phosphate-binding residues include S183, H211, and T240. An N6-(pyridoxal phosphate)lysine modification is found at K243. T357 lines the substrate pocket.

It belongs to the class-II pyridoxal-phosphate-dependent aminotransferase family. BioF subfamily. Homodimer. Pyridoxal 5'-phosphate is required as a cofactor.

The catalysed reaction is 6-carboxyhexanoyl-[ACP] + L-alanine + H(+) = (8S)-8-amino-7-oxononanoate + holo-[ACP] + CO2. It functions in the pathway cofactor biosynthesis; biotin biosynthesis. Catalyzes the decarboxylative condensation of pimeloyl-[acyl-carrier protein] and L-alanine to produce 8-amino-7-oxononanoate (AON), [acyl-carrier protein], and carbon dioxide. In Xanthomonas oryzae pv. oryzae (strain MAFF 311018), this protein is 8-amino-7-oxononanoate synthase.